Here is a 234-residue protein sequence, read N- to C-terminus: Zinc finger FYVE domain-containing protein 21 (234 aa).

An FYVE-type zinc finger spans residues Asp44–Leu104. Zn(2+)-binding residues include Cys50, Cys53, Cys66, Cys69, Cys74, Cys77, Cys96, and Cys99. The segment at Ala107–Gln234 is PH-like.

In terms of assembly, interacts with PTK2/FAK1.

The protein resides in the cell junction. It is found in the focal adhesion. The protein localises to the cytoplasmic vesicle. It localises to the endosome. Functionally, plays a role in cell adhesion, and thereby in cell motility which requires repeated formation and disassembly of focal adhesions. Regulates microtubule-induced PTK2/FAK1 dephosphorylation, an event important for focal adhesion disassembly, as well as integrin beta-1/ITGB1 cell surface expression. This Homo sapiens (Human) protein is Zinc finger FYVE domain-containing protein 21 (ZFYVE21).